The primary structure comprises 446 residues: 3-phosphoshikimate 1-carboxyvinyltransferase (446 aa).

The segment at 1–20 (MIMAKPLSSRRAAPLAGSAP) is disordered. Positions 25, 26, and 30 each coordinate 3-phosphoshikimate. Lysine 25 provides a ligand contact to phosphoenolpyruvate. The phosphoenolpyruvate site is built by glycine 98 and arginine 126. Positions 171, 173, 324, and 351 each coordinate 3-phosphoshikimate. Position 173 (glutamine 173) interacts with phosphoenolpyruvate. The Proton acceptor role is filled by aspartate 324. Arginine 355 and arginine 399 together coordinate phosphoenolpyruvate.

The protein belongs to the EPSP synthase family. As to quaternary structure, monomer.

The protein localises to the cytoplasm. The catalysed reaction is 3-phosphoshikimate + phosphoenolpyruvate = 5-O-(1-carboxyvinyl)-3-phosphoshikimate + phosphate. Its pathway is metabolic intermediate biosynthesis; chorismate biosynthesis; chorismate from D-erythrose 4-phosphate and phosphoenolpyruvate: step 6/7. Its function is as follows. Catalyzes the transfer of the enolpyruvyl moiety of phosphoenolpyruvate (PEP) to the 5-hydroxyl of shikimate-3-phosphate (S3P) to produce enolpyruvyl shikimate-3-phosphate and inorganic phosphate. The polypeptide is 3-phosphoshikimate 1-carboxyvinyltransferase (Paramagnetospirillum magneticum (strain ATCC 700264 / AMB-1) (Magnetospirillum magneticum)).